The following is a 350-amino-acid chain: Twinfilin-1 (350 aa).

Ser2 is modified (N-acetylserine). One can recognise an ADF-H 1 domain in the interval 2–139 (SHQTGIQASE…SLHGYKKYLL (138 aa)). 2 positions are modified to phosphoserine: Ser143 and Ser277. The ADF-H 2 domain maps to 175-313 (LQGVAFPISR…TADFLYEEVH (139 aa)). Tyr309 bears the Phosphotyrosine mark. The disordered stretch occupies residues 316–350 (QHAHKQSFAKPKGPAGKRGIRRLIRGPAETEATTD). Thr349 bears the Phosphothreonine mark.

The protein belongs to the actin-binding proteins ADF family. Twinfilin subfamily. Interacts with G-actin; ADP-actin form and capping protein (CP). May also be able to interact with TWF2 and phosphoinositides, PI(4,5)P2. When bound to PI(4,5)P2, it is down-regulated. Interacts with ACTG1. Phosphorylated on serine and threonine residues. Expressed at high levels in the colon, testis, ovary, prostate and lung. Expressed at lower levels in the brain, bladder and heart. Not detected in liver.

It localises to the cytoplasm. It is found in the cytoskeleton. In terms of biological role, actin-binding protein involved in motile and morphological processes. Inhibits actin polymerization, likely by sequestering G-actin. By capping the barbed ends of filaments, it also regulates motility. Seems to play an important role in clathrin-mediated endocytosis and distribution of endocytic organelles. The polypeptide is Twinfilin-1 (TWF1) (Homo sapiens (Human)).